Reading from the N-terminus, the 305-residue chain is Sulfate adenylyltransferase subunit 2 1 (305 aa).

The tract at residues 283–305 (RSGRAIDHDQAGSMERKKREGYF) is disordered.

The protein belongs to the PAPS reductase family. CysD subfamily. As to quaternary structure, heterodimer composed of CysD, the smaller subunit, and CysN.

The enzyme catalyses sulfate + ATP + H(+) = adenosine 5'-phosphosulfate + diphosphate. It participates in sulfur metabolism; hydrogen sulfide biosynthesis; sulfite from sulfate: step 1/3. Functionally, with CysN forms the ATP sulfurylase (ATPS) that catalyzes the adenylation of sulfate producing adenosine 5'-phosphosulfate (APS) and diphosphate, the first enzymatic step in sulfur assimilation pathway. APS synthesis involves the formation of a high-energy phosphoric-sulfuric acid anhydride bond driven by GTP hydrolysis by CysN coupled to ATP hydrolysis by CysD. In Chromohalobacter salexigens (strain ATCC BAA-138 / DSM 3043 / CIP 106854 / NCIMB 13768 / 1H11), this protein is Sulfate adenylyltransferase subunit 2 1.